A 196-amino-acid polypeptide reads, in one-letter code: DNA polymerase epsilon subunit D (196 aa).

The tract at residues 125–196 is disordered; the sequence is RKKEKLDSGE…ETRVQNLEQT (72 aa). Over residues 133–143 the composition is skewed to acidic residues; it reads GEVDADGDIDM. Basic and acidic residues predominate over residues 144-159; the sequence is GEDKENVPVEKVKEHD. Residues 160 to 173 show a composition bias toward acidic residues; the sequence is EIEEQGDALQDVEE. Residues 174-188 are compositionally biased toward basic and acidic residues; the sequence is SSEKKQKTESQDVET. Phosphoserine; by ATM or ATR is present on serine 183.

DNA polymerase epsilon is a heterotetramer consisting of POL2, DPB2, DPB3 and DPB4. Component of the ISW2 complex, which at least consists of ISW2, ITC1, DLS1 and DPB4.

It localises to the nucleus. Functionally, as accessory component of the DNA polymerase epsilon (DNA polymerase II) participates in chromosomal DNA replication. It is required during synthesis of the leading and lagging DNA strands at the replication fork and binds at/or near replication origins and moves along DNA with the replication fork. It has 3'-5' proofreading exonuclease activity that correct errors arising during DNA replication. It is also involved in DNA synthesis during DNA repair. Also functions as a component of the ISW2 complex, which acts in remodeling the chromatin by catalyzing an ATP-dependent alteration in the structure of nucleosomal DNA. The ISW2 complex is involved in coordinating transcriptional repression and in inheritance of telomeric silencing. It is involved in repression of MAT a-specific genes, INO1, and early meiotic genes during mitotic growth dependent upon transcription factor UME6 and in a parallel pathway to the RPD3-SIN3 histone deacetylase complex. This is DNA polymerase epsilon subunit D (DPB4) from Saccharomyces cerevisiae (strain ATCC 204508 / S288c) (Baker's yeast).